Reading from the N-terminus, the 555-residue chain is Coiled-coil domain-containing protein 102A (555 aa).

Disordered regions lie at residues 1–68 (MSHG…ADGD), 136–202 (LAGA…GSQE), and 214–254 (PEEP…EEDA). Phosphoserine occurs at positions 12, 26, and 28. The segment covering 37–61 (SLPPTPPSGTPSPGPPPALPLPPTP) has biased composition (pro residues). The stretch at 72–161 (REELRLRELE…ARGRELARLR (90 aa)) forms a coiled coil. 2 stretches are compositionally biased toward basic and acidic residues: residues 136 to 159 (LAGARRERQEAQGESEARGRELAR) and 166 to 183 (GVDRTPDGPETEPEREQE). Over residues 224–236 (RSAGAGAPRGSSG) the composition is skewed to low complexity. 2 coiled-coil regions span residues 268-401 (QKVL…RRQT) and 432-522 (KLKK…QNAP). Residues 478 to 555 (ELDEAHNQAR…EDEDLQIQVA (78 aa)) are disordered. A compositionally biased stretch (acidic residues) spans 536-555 (EAGDGASDLDEDEDLQIQVA). S542 carries the phosphoserine modification.

The chain is Coiled-coil domain-containing protein 102A (CCDC102A) from Bos taurus (Bovine).